Here is a 415-residue protein sequence, read N- to C-terminus: Lipoyl synthase, mitochondrial (415 aa).

A mitochondrion-targeting transit peptide spans 1-32 (MAASTNRLRFLYSSARTVPQTGSITPISRRTY). Positions 22–32 (GSITPISRRTY) are enriched in polar residues. The interval 22 to 53 (GSITPISRRTYATTEPSPSATGAPATARKRTN) is disordered. Residues 33-47 (ATTEPSPSATGAPAT) show a composition bias toward low complexity. [4Fe-4S] cluster-binding residues include Cys132, Cys137, Cys143, Cys163, Cys167, Cys170, and Ser378. The Radical SAM core domain occupies 146–367 (GSDKSAATAT…RQRALDMGFL (222 aa)). The disordered stretch occupies residues 395–415 (AAGTAGESVTDSKAAVDEATR).

The protein belongs to the radical SAM superfamily. Lipoyl synthase family. [4Fe-4S] cluster serves as cofactor.

Its subcellular location is the mitochondrion. The catalysed reaction is [[Fe-S] cluster scaffold protein carrying a second [4Fe-4S](2+) cluster] + N(6)-octanoyl-L-lysyl-[protein] + 2 oxidized [2Fe-2S]-[ferredoxin] + 2 S-adenosyl-L-methionine + 4 H(+) = [[Fe-S] cluster scaffold protein] + N(6)-[(R)-dihydrolipoyl]-L-lysyl-[protein] + 4 Fe(3+) + 2 hydrogen sulfide + 2 5'-deoxyadenosine + 2 L-methionine + 2 reduced [2Fe-2S]-[ferredoxin]. It functions in the pathway protein modification; protein lipoylation via endogenous pathway; protein N(6)-(lipoyl)lysine from octanoyl-[acyl-carrier-protein]: step 2/2. Its function is as follows. Catalyzes the radical-mediated insertion of two sulfur atoms into the C-6 and C-8 positions of the octanoyl moiety bound to the lipoyl domains of lipoate-dependent enzymes, thereby converting the octanoylated domains into lipoylated derivatives. The protein is Lipoyl synthase, mitochondrial of Aspergillus oryzae (strain ATCC 42149 / RIB 40) (Yellow koji mold).